The chain runs to 357 residues: BLOC-1-related complex subunit 6 (357 aa).

A disordered region spans residues 20 to 196 (HQALVFGGGP…SGAGGGRRAT (177 aa)). Low complexity predominate over residues 90–99 (GAGSRRGAPG). Acidic residues predominate over residues 138-149 (EQQEEEDNDEEA). Positions 150 to 162 (AAGSRAGRSFSSR) are enriched in low complexity. Ser168 bears the Phosphoserine mark. Thr196 is modified (phosphothreonine). Phosphoserine is present on Ser199. The tract at residues 227 to 256 (LSGAPPPPPSAPARPCPAPAPTPTPAIPPI) is disordered. Positions 230-256 (APPPPPSAPARPCPAPAPTPTPAIPPI) are enriched in pro residues.

The protein belongs to the BORCS6 family. As to quaternary structure, component of the BLOC-one-related complex (BORC) which is composed of BLOC1S1, BLOC1S2, BORCS5, BORCS6, BORCS7, BORCS8, KXD1 and SNAPIN.

The protein localises to the lysosome membrane. Its function is as follows. As part of the BORC complex may play a role in lysosomes movement and localization at the cell periphery. Associated with the cytosolic face of lysosomes, the BORC complex may recruit ARL8B and couple lysosomes to microtubule plus-end-directed kinesin motor. The protein is BLOC-1-related complex subunit 6 of Homo sapiens (Human).